The following is a 73-amino-acid chain: Mucroporin-like peptide (73 aa).

The first 22 residues, 1 to 22 (MKVKCLLAVFLIVLIAAEHCQA), serve as a signal peptide directing secretion. Residue Lys-38 is modified to Lysine amide. The propeptide occupies 44–73 (ELGTQFQPRQKNFMRREVDLERLFAEMPDY).

Belongs to the non-disulfide-bridged peptide (NDBP) superfamily. Short antimicrobial peptide (group 4) family. As to expression, expressed by the venom gland.

Its subcellular location is the secreted. It localises to the target cell membrane. In terms of biological role, cationic host defense peptide that have antibacterial activity by breaking membranes. Is more effective on Gram-positive than on Gram-negative bacteria. The polypeptide is Mucroporin-like peptide (Lychas mucronatus (Chinese swimming scorpion)).